A 245-amino-acid polypeptide reads, in one-letter code: Polyhedrin (245 aa).

This sequence belongs to the polyhedrin family.

Its function is as follows. Major component of the virus occlusion bodies, which are large proteinaceous structures (polyhedra), that protect the virus from the outside environment for extended periods until they are ingested by insect larvae. This Hyphantria cunea nuclear polyhedrosis virus (HcNPV) protein is Polyhedrin (PH).